A 519-amino-acid polypeptide reads, in one-letter code: Cilia- and flagella-associated protein 157 (519 aa).

Basic residues predominate over residues 1 to 11; the sequence is MPPKKKGKRGP. Positions 1–25 are disordered; the sequence is MPPKKKGKRGPSAKTKEKETVRVAS. 2 coiled-coil regions span residues 28–185 and 241–356; these read VTEQ…EKKV and IELI…QRTL.

It belongs to the CFAP157 family.

The protein localises to the cytoplasm. It localises to the cytoskeleton. Its subcellular location is the cilium basal body. Its function is as follows. Specifically required during spermatogenesis for flagellum morphogenesis and sperm motility. This chain is Cilia- and flagella-associated protein 157, found in Xenopus tropicalis (Western clawed frog).